The following is a 36-amino-acid chain: PSEQYQPYPEQQQPFLQQQPLELQQQQXXLVLFLQK.

This sequence belongs to the gliadin/glutenin family. In terms of assembly, monomer.

Its subcellular location is the vacuole. It localises to the aleurone grain. Functionally, seed storage protein. Serves as a source of nitrogen, carbon, and sulfur for the young developing seedling. This chain is Avenin-A, found in Avena sativa (Oat).